The following is a 159-amino-acid chain: 17 kDa surface antigen (159 aa).

The first 19 residues, 1 to 19, serve as a signal peptide directing secretion; it reads MKLLSKIMIIALAASMLQA. A lipid anchor (N-palmitoyl cysteine) is attached at C20. C20 carries S-diacylglycerol cysteine lipidation.

The protein belongs to the rickettsiale 17 kDa surface antigen family.

Its subcellular location is the cell outer membrane. This Rickettsia felis (strain ATCC VR-1525 / URRWXCal2) (Rickettsia azadi) protein is 17 kDa surface antigen (omp).